A 481-amino-acid chain; its full sequence is Glutamyl-tRNA(Gln) amidotransferase subunit A (481 aa).

Catalysis depends on charge relay system residues K74 and S149. S173 acts as the Acyl-ester intermediate in catalysis.

The protein belongs to the amidase family. GatA subfamily. As to quaternary structure, heterotrimer of A, B and C subunits.

It carries out the reaction L-glutamyl-tRNA(Gln) + L-glutamine + ATP + H2O = L-glutaminyl-tRNA(Gln) + L-glutamate + ADP + phosphate + H(+). Its function is as follows. Allows the formation of correctly charged Gln-tRNA(Gln) through the transamidation of misacylated Glu-tRNA(Gln) in organisms which lack glutaminyl-tRNA synthetase. The reaction takes place in the presence of glutamine and ATP through an activated gamma-phospho-Glu-tRNA(Gln). The chain is Glutamyl-tRNA(Gln) amidotransferase subunit A from Francisella tularensis subsp. tularensis (strain WY96-3418).